The primary structure comprises 197 residues: RNA chaperone ProQ (197 aa).

The disordered stretch occupies residues 115-138; the sequence is RAAAKKAQQKKHPRKPANKNLKKE. A compositionally biased stretch (basic residues) spans 117–131; that stretch reads AAKKAQQKKHPRKPA.

This sequence belongs to the ProQ family.

It is found in the cytoplasm. Its function is as follows. RNA chaperone with significant RNA binding, RNA strand exchange and RNA duplexing activities. The protein is RNA chaperone ProQ of Haemophilus influenzae (strain ATCC 51907 / DSM 11121 / KW20 / Rd).